A 222-amino-acid chain; its full sequence is Protein GrpE (222 aa).

The disordered stretch occupies residues 1–82 (MSDFNKDEYL…KADDTLTPLG (82 aa)). A compositionally biased stretch (low complexity) spans 20–71 (SGQAAPAAASADSAAAAAGATQEGAAQPAAAQSQENGDSAAADGADKAGAAD).

The protein belongs to the GrpE family. In terms of assembly, homodimer.

It localises to the cytoplasm. Functionally, participates actively in the response to hyperosmotic and heat shock by preventing the aggregation of stress-denatured proteins, in association with DnaK and GrpE. It is the nucleotide exchange factor for DnaK and may function as a thermosensor. Unfolded proteins bind initially to DnaJ; upon interaction with the DnaJ-bound protein, DnaK hydrolyzes its bound ATP, resulting in the formation of a stable complex. GrpE releases ADP from DnaK; ATP binding to DnaK triggers the release of the substrate protein, thus completing the reaction cycle. Several rounds of ATP-dependent interactions between DnaJ, DnaK and GrpE are required for fully efficient folding. This chain is Protein GrpE, found in Bifidobacterium adolescentis (strain ATCC 15703 / DSM 20083 / NCTC 11814 / E194a).